A 651-amino-acid chain; its full sequence is ATP synthase F(1) complex catalytic subunit beta, mitochondrial (651 aa).

A mitochondrion-targeting transit peptide spans 1-30 (MFVARRLSKNITQISKTAVKTSVRAVPVRG). The ADP site is built by G259, V260, G261, K262, T263, and V264. An ATP-binding site is contributed by G259. 5 residues coordinate phosphate: G259, V260, G261, K262, and T263. ATP contacts are provided by G261, K262, T263, and V264. T263 serves as a coordination point for Mg(2+). E288 is a Mg(2+) binding site. Position 289 (R289) interacts with ATP.

This sequence belongs to the ATPase alpha/beta chains family. Homotrimer. Component of the ATP synthase complex composed at least of ATP5F1A/subunit alpha, ATP5F1B/subunit beta, ATP5MC1/subunit c (homooctomer), MT-ATP6/subunit a, MT-ATP8/subunit 8, ATP5ME/subunit e, ATP5MF/subunit f, ATP5MG/subunit g, ATP5MK/subunit k, ATP5MJ/subunit j, ATP5F1C/subunit gamma, ATP5F1D/subunit delta, ATP5F1E/subunit epsilon, ATP5PF/subunit F6, ATP5PB/subunit b, ATP5PD/subunit d, ATP5PO/subunit OSCP. ATP synthase complex consists of a soluble F(1) head domain (subunits alpha(3) and beta(3)) - the catalytic core - and a membrane F(0) domain - the membrane proton channel (subunits c, a, 8, e, f, g, k and j). These two domains are linked by a central stalk (subunits gamma, delta, and epsilon) rotating inside the F1 region and a stationary peripheral stalk (subunits F6, b, d, and OSCP).

It localises to the mitochondrion inner membrane. It carries out the reaction ATP + H2O + 4 H(+)(in) = ADP + phosphate + 5 H(+)(out). In terms of biological role, catalytic subunit beta, of the mitochondrial membrane ATP synthase complex (F(1)F(0) ATP synthase or Complex V) that produces ATP from ADP in the presence of a proton gradient across the membrane which is generated by electron transport complexes of the respiratory chain. ATP synthase complex consist of a soluble F(1) head domain - the catalytic core - and a membrane F(1) domain - the membrane proton channel. These two domains are linked by a central stalk rotating inside the F(1) region and a stationary peripheral stalk. During catalysis, ATP synthesis in the catalytic domain of F(1) is coupled via a rotary mechanism of the central stalk subunits to proton translocation. In vivo, can only synthesize ATP although its ATP hydrolase activity can be activated artificially in vitro. With the subunit alpha (ATP5F1A), forms the catalytic core in the F(1) domain. This Dictyostelium discoideum (Social amoeba) protein is ATP synthase F(1) complex catalytic subunit beta, mitochondrial.